A 176-amino-acid polypeptide reads, in one-letter code: Protein GrpE (176 aa).

Positions 1–31 are disordered; the sequence is MSEQKQEFENENAENSEHLQDENLQNIEDVE.

The protein belongs to the GrpE family. In terms of assembly, homodimer.

It localises to the cytoplasm. Functionally, participates actively in the response to hyperosmotic and heat shock by preventing the aggregation of stress-denatured proteins, in association with DnaK and GrpE. It is the nucleotide exchange factor for DnaK and may function as a thermosensor. Unfolded proteins bind initially to DnaJ; upon interaction with the DnaJ-bound protein, DnaK hydrolyzes its bound ATP, resulting in the formation of a stable complex. GrpE releases ADP from DnaK; ATP binding to DnaK triggers the release of the substrate protein, thus completing the reaction cycle. Several rounds of ATP-dependent interactions between DnaJ, DnaK and GrpE are required for fully efficient folding. The polypeptide is Protein GrpE (Campylobacter jejuni subsp. doylei (strain ATCC BAA-1458 / RM4099 / 269.97)).